The sequence spans 198 residues: Transcriptional regulator GfcR (198 aa).

This sequence belongs to the purine/pyrimidine phosphoribosyltransferase family. GfcR subfamily.

In Thermoplasma acidophilum (strain ATCC 25905 / DSM 1728 / JCM 9062 / NBRC 15155 / AMRC-C165), this protein is Transcriptional regulator GfcR.